The chain runs to 458 residues: ATP synthase subunit beta (458 aa).

148–155 contributes to the ATP binding site; sequence GGAGVGKT.

It belongs to the ATPase alpha/beta chains family. In terms of assembly, F-type ATPases have 2 components, CF(1) - the catalytic core - and CF(0) - the membrane proton channel. CF(1) has five subunits: alpha(3), beta(3), gamma(1), delta(1), epsilon(1). CF(0) has three main subunits: a(1), b(2) and c(9-12). The alpha and beta chains form an alternating ring which encloses part of the gamma chain. CF(1) is attached to CF(0) by a central stalk formed by the gamma and epsilon chains, while a peripheral stalk is formed by the delta and b chains.

The protein resides in the cell inner membrane. It catalyses the reaction ATP + H2O + 4 H(+)(in) = ADP + phosphate + 5 H(+)(out). Functionally, produces ATP from ADP in the presence of a proton gradient across the membrane. The catalytic sites are hosted primarily by the beta subunits. The polypeptide is ATP synthase subunit beta (Pseudomonas fluorescens (strain Pf0-1)).